The primary structure comprises 539 residues: Dopamine receptor 2 (539 aa).

The Extracellular portion of the chain corresponds to 1 to 113 (MVDDNGSSPE…LPNDRVGLLA (113 aa)). 4 N-linked (GlcNAc...) asparagine glycosylation sites follow: Asn5, Asn31, Asn47, and Asn68. The chain crosses the membrane as a helical span at residues 114–134 (FLFLFSFATVFGNSLVILAVI). The Cytoplasmic segment spans residues 135–145 (RERYLHTATNY). The helical transmembrane segment at 146–166 (FITSLAVADCLVGLVVMPFSA) threads the bilayer. Over 167 to 189 (LYEVLENTWFFGTDWCDIWRSLD) the chain is Extracellular. Cys182 and Cys261 are disulfide-bonded. Residues 190–206 (VLFSTASILNLCVISLD) form a helical membrane-spanning segment. At 207 to 227 (RYWAITDPFSYPMRMTVKRAA) the chain is on the cytoplasmic side. The helical transmembrane segment at 228 to 248 (GLIAAVWICSSAISFPAIVWW) threads the bilayer. Topologically, residues 249–266 (RAARDGEMPAYKCTFTEH) are extracellular. A helical transmembrane segment spans residues 267-287 (LGYLVFSSTISFYLPLLVMVF). Topologically, residues 288–420 (TYCRIYRAAV…FAKEKKAAKT (133 aa)) are cytoplasmic. The tract at residues 326 to 387 (GGTTRDQQNQ…EPDDEPLSAL (62 aa)) is disordered. Over residues 337 to 352 (SGGGGGGGGGGGGGGS) the composition is skewed to gly residues. Over residues 356 to 367 (SHSHSHHHHHNH) the composition is skewed to basic residues. The chain crosses the membrane as a helical span at residues 421–441 (LGIVMGVFIICWLPFFVVNLL). The Extracellular portion of the chain corresponds to 442 to 453 (SGFCIECIEHEE). The chain crosses the membrane as a helical span at residues 454–474 (IVSAIVTWLGWINSCMNPVIY). Over 475–539 (ACWSRDFRRA…RHNSCEQTYI (65 aa)) the chain is Cytoplasmic. Residues Cys492 and Cys493 are each lipidated (S-palmitoyl cysteine).

This sequence belongs to the G-protein coupled receptor 1 family. As to expression, expressed in both central and peripheral nervous systems.

Its subcellular location is the cell membrane. Receptor for dopamine. The activity of this receptor is mediated by G proteins which activate adenylyl cyclase. Also capable of generating a calcium signal. In terms of antagonist responses, would be classed with the D1-like dopamine receptor group. This receptor is an attractive candidate for initiating biochemical cascades underlying olfactory learning. In Drosophila melanogaster (Fruit fly), this protein is Dopamine receptor 2 (Dop1R2).